We begin with the raw amino-acid sequence, 432 residues long: MSSSCSGLTRVLVAVATALVSSSSPCPQAWGPPGVQYGQPGRPVMLCCPGVSAGTPVSWFRDGDSRLLQGPDSGLGHRLVLAQVDSPDEGTYVCQTLDGVSGGMVTLKLGFPPARPEVSCQAVDYENFSCTWSPGQVSGLPTRYLTSYRKKTLPGAESQRESPSTGPWPCPQDPLEASRCVVHGAEFWSEYRINVTEVNPLGASTCLLDVRLQSILRPDPPQGLRVESVPGYPRRLHASWTYPASWRRQPHFLLKFRLQYRPAQHPAWSTVEPIGLEEVITDAVAGLPHAVRVSARDFLDAGTWSAWSPEAWGTPSTGPLQDEIPDWSQGHGQQLEAVVAQEDSPAPARPSLQPDPRPLDHRDPLEQVAVLASLGIFSCLGLAVGALALGLWLRLRRSGKDGPQKPGLLAPMIPVEKLPGIPNLQRTPENFS.

The N-terminal stretch at 1 to 23 (MSSSCSGLTRVLVAVATALVSSS) is a signal peptide. At 24–372 (SPCPQAWGPP…DPLEQVAVLA (349 aa)) the chain is on the extracellular side. The region spanning 27–110 (PQAWGPPGVQ…SGGMVTLKLG (84 aa)) is the Ig-like C2-type domain. Disulfide bonds link cysteine 48/cysteine 94, cysteine 120/cysteine 130, and cysteine 170/cysteine 180. Fibronectin type-III domains follow at residues 112 to 219 (PPAR…LRPD) and 220 to 317 (PPQG…TPST). A glycan (N-linked (GlcNAc...) asparagine) is linked at asparagine 127. Residues 151-170 (KTLPGAESQRESPSTGPWPC) are disordered. An N-linked (GlcNAc...) asparagine glycan is attached at asparagine 194. A WSXWS motif motif is present at residues 304–308 (WSAWS). Disordered regions lie at residues 309–332 (PEAW…QGHG) and 342–361 (EDSP…PLDH). A helical membrane pass occupies residues 373–393 (SLGIFSCLGLAVGALALGLWL). Over 394–432 (RLRRSGKDGPQKPGLLAPMIPVEKLPGIPNLQRTPENFS) the chain is Cytoplasmic.

The protein belongs to the type I cytokine receptor family. Type 3 subfamily. On IL11 binding, forms a multimer complex with IL6ST/gp130. Post-translationally, a short soluble form is also released from the membrane by proteolysis. The sIL11RA is formed either by limited proteolysis of membrane-bound receptors, a process referred to as ectodomain shedding, or directly secreted from the cells after alternative mRNA splicing. mIL11RA is cleaved by the proteases ADAM10, ELANE and PRTN3. Widely expressed in all adult tissues and in embryos. Highest levels in kidney, skeletal muscle and embryo.

The protein localises to the membrane. Its subcellular location is the secreted. Its function is as follows. Receptor for interleukin-11. The receptor systems for IL6, LIF, OSM, CNTF, IL11 and CT1 can utilize IL6ST for initiating signal transmission. The IL11/IL11RA/IL6ST complex may be involved in the control of proliferation and/or differentiation of skeletogenic progenitor or other mesenchymal cells. Essential for the normal development of craniofacial bones and teeth. In terms of biological role, soluble form of IL11 receptor (sIL11RA) that acts as an agonist of IL11 activity. The IL11:sIL11RA complex binds to IL6ST/gp130 on cell surfaces and induces signaling also on cells that do not express membrane-bound IL11RA in a process called IL11 trans-signaling. This Mus musculus (Mouse) protein is Interleukin-11 receptor subunit alpha-1.